Here is a 315-residue protein sequence, read N- to C-terminus: Transcription antitermination protein NusB (315 aa).

A disordered region spans residues 296–315; sequence SANFDTKSAELNDADEKSQD. A compositionally biased stretch (basic and acidic residues) spans 302-315; that stretch reads KSAELNDADEKSQD.

The protein belongs to the NusB family.

Functionally, involved in transcription antitermination. Required for transcription of ribosomal RNA (rRNA) genes. Binds specifically to the boxA antiterminator sequence of the ribosomal RNA (rrn) operons. The sequence is that of Transcription antitermination protein NusB from Psychrobacter cryohalolentis (strain ATCC BAA-1226 / DSM 17306 / VKM B-2378 / K5).